The chain runs to 898 residues: Interleukin enhancer-binding factor 3 (898 aa).

Residues 5 to 378 (RIFVNDDRHV…PMKRPMEEDG (374 aa)) form the DZF domain. A disordered region spans residues 52 to 85 (QEKGNSELSEAENMDTPPDDESKEGAGEQKAEHM). Acidic residues predominate over residues 60-73 (SEAENMDTPPDDES). T67 is modified (phosphothreonine). Residues 74–85 (KEGAGEQKAEHM) show a composition bias toward basic and acidic residues. The residue at position 100 (K100) is an N6-acetyllysine. A Phosphothreonine; by PKR modification is found at T188. Residue S190 is modified to Phosphoserine. K297 participates in a covalent cross-link: Glycyl lysine isopeptide (Lys-Gly) (interchain with G-Cter in ubiquitin). Position 315 is a phosphothreonine; by PKR (T315). K348 participates in a covalent cross-link: Glycyl lysine isopeptide (Lys-Gly) (interchain with G-Cter in SUMO1). Residues 363 to 402 (TTYAITPMKRPMEEDGEEKSPSKKKKKIQKKEEKADPPQA) form a disordered region. The Bipartite nuclear localization signal signature appears at 371–389 (KRPMEEDGEEKSPSKKKKK). Over residues 372-383 (RPMEEDGEEKSP) the composition is skewed to basic and acidic residues. Phosphoserine is present on residues S382 and S384. K396 participates in a covalent cross-link: Glycyl lysine isopeptide (Lys-Gly) (interchain with G-Cter in SUMO2). The DRBM 1 domain occupies 398-467 (DPPQAMNALM…AVKVLQDMGL (70 aa)). K460 is subject to N6-acetyllysine. Disordered regions lie at residues 466 to 495 (GLPT…IVAP) and 505 to 524 (PSSV…LTKH). Basic and acidic residues predominate over residues 472–481 (EGRDSSKGED). Phosphoserine is present on residues S476, S477, S482, and S486. K489 is covalently cross-linked (Glycyl lysine isopeptide (Lys-Gly) (interchain with G-Cter in SUMO2)). A DRBM 2 domain is found at 524–590 (HGKNPVMELN…ALAALEKLFP (67 aa)). T592 bears the Phosphothreonine mark. Positions 609-898 (RGGPKFAAKP…TEHSMNYQYR (290 aa)) are interaction with PRMT1. Disordered regions lie at residues 631 to 661 (NEVP…GGAN) and 719 to 898 (QGDS…YQYR). Residues 644 to 661 (RGGNIRGRGRGRGFGGAN) are compositionally biased toward gly residues. Composition is skewed to low complexity over residues 745–769 (SYSS…SSYG), 783–794 (GSYSSYSNSYNS), and 802–812 (DYSYDSKFNYS). S794, S812, S814, and S818 each carry phosphoserine. Gly residues predominate over residues 813–822 (GSGGRSGGNS). The segment covering 823 to 834 (YGSSGSSSYNTG) has biased composition (low complexity). Residues 835–845 (SHGGYGTGSGG) show a composition bias toward gly residues. Residues 846–886 (SSSYQGKQGGYSSQSNYSSPGSSQSYSGPASSYQSSQGGYS) show a composition bias toward low complexity.

Identified in a IGF2BP1-dependent mRNP granule complex containing untranslated mRNAs. Interacts with FUS and SMN. Interacts (via C-terminus) with PRMT1. Forms a complex with ILF2. Can also bind to PRKDC/XRCC7: this may stabilize the interaction of PRKDC/XRCC7 and the heterodimeric complex of XRCC6/KU70 and XRCC5/KU80. Forms a heteromeric complex with ZNF346 and ILF3. Found in a nuclear export complex with XPO5, ILF3, Ran and double-stranded RNA or double-stranded minihelix VA1 RNA. Found in a nuclear export complex with XPO5, RAN, ILF3, ZNF346 and double-stranded RNA. Interacts with XPO5 and ZNF346. Forms a complex with ILF2, YLPM1, KHDRBS1, RBMX, NCOA5 and PPP1CA. Interacts with AGO1 and AGO2. Interacts with DHX36; this interaction occurs in a RNA-dependent manner. Interacts with ELAVL1; this interaction occurs in a RNA-dependent manner. Interacts with HAVCR2; this interaction promotes ILF3 ubiquitination and subsequent degradation. Phosphorylated at Thr-188 and Thr-315 by PKR in response to RNA viruses. This phosphorylation results in the dissociation of ILF2 from the ILF2-ILF3 complex resulting in a cytoplasmic sequestration of ILF3 where it can bind to viral RNAs and impede viral replication. Post-translationally, methylated by protein arginine N-methyltransferase 1. In terms of tissue distribution, ubiquitous. Expressed at high levels in the thymus, testis, ovary and at lower levelss in the spleen.

Its subcellular location is the nucleus. The protein resides in the nucleolus. The protein localises to the cytoplasm. Functionally, RNA-binding protein that plays an essential role in the biogenesis of circular RNAs (circRNAs) which are produced by back-splicing circularization of pre-mRNAs. Within the nucleus, promotes circRNAs processing by stabilizing the regulatory elements residing in the flanking introns of the circularized exons. Plays thereby a role in the back-splicing of a subset of circRNAs. As a consequence, participates in a wide range of transcriptional and post-transcriptional processes. Binds to poly-U elements and AU-rich elements (AREs) in the 3'-UTR of target mRNAs. Upon viral infection, ILF3 accumulates in the cytoplasm and participates in the innate antiviral response. Mechanistically, ILF3 becomes phosphorylated and activated by the double-stranded RNA-activated protein kinase/PKR which releases ILF3 from cellular mature circRNAs. In turn, unbound ILF3 molecules are able to interact with and thus inhibit viral mRNAs. This Mus musculus (Mouse) protein is Interleukin enhancer-binding factor 3 (Ilf3).